We begin with the raw amino-acid sequence, 266 residues long: 4-hydroxy-tetrahydrodipicolinate reductase (266 aa).

NAD(+) contacts are provided by residues 7 to 12, glutamate 33, 96 to 98, and 120 to 123; these read GTIGRM, GTT, and APNM. Histidine 153 acts as the Proton donor/acceptor in catalysis. Histidine 154 is a binding site for (S)-2,3,4,5-tetrahydrodipicolinate. Lysine 157 (proton donor) is an active-site residue. 163–164 serves as a coordination point for (S)-2,3,4,5-tetrahydrodipicolinate; it reads GT.

It belongs to the DapB family.

It is found in the cytoplasm. The catalysed reaction is (S)-2,3,4,5-tetrahydrodipicolinate + NAD(+) + H2O = (2S,4S)-4-hydroxy-2,3,4,5-tetrahydrodipicolinate + NADH + H(+). It carries out the reaction (S)-2,3,4,5-tetrahydrodipicolinate + NADP(+) + H2O = (2S,4S)-4-hydroxy-2,3,4,5-tetrahydrodipicolinate + NADPH + H(+). Its pathway is amino-acid biosynthesis; L-lysine biosynthesis via DAP pathway; (S)-tetrahydrodipicolinate from L-aspartate: step 4/4. In terms of biological role, catalyzes the conversion of 4-hydroxy-tetrahydrodipicolinate (HTPA) to tetrahydrodipicolinate. The protein is 4-hydroxy-tetrahydrodipicolinate reductase of Polynucleobacter necessarius subsp. necessarius (strain STIR1).